A 317-amino-acid chain; its full sequence is Probable deoxyhypusine synthase (317 aa).

K285 functions as the Nucleophile in the catalytic mechanism.

The protein belongs to the deoxyhypusine synthase family. Requires NAD(+) as cofactor.

The enzyme catalyses [eIF5A protein]-L-lysine + spermidine = [eIF5A protein]-deoxyhypusine + propane-1,3-diamine. It participates in protein modification; eIF5A hypusination. Catalyzes the NAD-dependent oxidative cleavage of spermidine and the subsequent transfer of the butylamine moiety of spermidine to the epsilon-amino group of a specific lysine residue of the eIF-5A precursor protein to form the intermediate deoxyhypusine residue. This Methanosarcina thermophila protein is Probable deoxyhypusine synthase (dys).